The following is a 938-amino-acid chain: Isoleucine--tRNA ligase (938 aa).

A 'HIGH' region motif is present at residues 58–68 (PYANGHLHMGH). Residue E566 participates in L-isoleucyl-5'-AMP binding. Residues 607–611 (KMSKS) carry the 'KMSKS' region motif. ATP is bound at residue K610. Residues C906, C909, C926, and C929 each coordinate Zn(2+).

It belongs to the class-I aminoacyl-tRNA synthetase family. IleS type 1 subfamily. As to quaternary structure, monomer. Requires Zn(2+) as cofactor.

Its subcellular location is the cytoplasm. The enzyme catalyses tRNA(Ile) + L-isoleucine + ATP = L-isoleucyl-tRNA(Ile) + AMP + diphosphate. Its function is as follows. Catalyzes the attachment of isoleucine to tRNA(Ile). As IleRS can inadvertently accommodate and process structurally similar amino acids such as valine, to avoid such errors it has two additional distinct tRNA(Ile)-dependent editing activities. One activity is designated as 'pretransfer' editing and involves the hydrolysis of activated Val-AMP. The other activity is designated 'posttransfer' editing and involves deacylation of mischarged Val-tRNA(Ile). The chain is Isoleucine--tRNA ligase from Desulfovibrio desulfuricans (strain ATCC 27774 / DSM 6949 / MB).